The sequence spans 243 residues: Linker for activation of T-cells family member 2 (243 aa).

Residues M1–T5 lie on the Extracellular side of the membrane. Residues E6–V26 form a helical; Signal-anchor for type III membrane protein membrane-spanning segment. S-palmitoyl cysteine attachment occurs at residues C25 and C28. Residues R27–A243 lie on the Cytoplasmic side of the membrane. S44 carries the post-translational modification Phosphoserine. A Phosphotyrosine modification is found at Y58. Phosphoserine occurs at positions 59 and 92. 3 positions are modified to phosphotyrosine: Y136, Y193, and Y233. Residues P174–A243 are disordered.

When phosphorylated, interacts with GRB2. May also interact with SOS1, GAB1 and CBL. Phosphorylated on tyrosines following cross-linking of BCR in B-cells, FCGR1 in myeloid cells, or FCER1 in mast cells; which induces the recruitment of GRB2. Post-translationally, may be polyubiquitinated. In terms of tissue distribution, highly expressed in spleen, peripheral blood lymphocytes, and germinal centers of lymph nodes. Also expressed in placenta, lung, pancreas and small intestine. Present in B-cells, NK cells and monocytes. Absent from T-cells (at protein level).

The protein resides in the cell membrane. Its function is as follows. Involved in FCER1 (high affinity immunoglobulin epsilon receptor)-mediated signaling in mast cells. May also be involved in BCR (B-cell antigen receptor)-mediated signaling in B-cells and FCGR1 (high affinity immunoglobulin gamma Fc receptor I)-mediated signaling in myeloid cells. Couples activation of these receptors and their associated kinases with distal intracellular events through the recruitment of GRB2. The chain is Linker for activation of T-cells family member 2 (LAT2) from Homo sapiens (Human).